A 282-amino-acid chain; its full sequence is Protoheme IX farnesyltransferase (282 aa).

Helical transmembrane passes span 9–29 (LAKP…FLLA), 39–59 (LPLF…GCVF), 79–99 (LVTG…LLIL), 102–122 (LVLY…GFIV), 139–159 (VLGG…VVNI), 165–185 (LALF…IAML), 210–230 (IMLF…VLGS), 231–251 (ADLF…YKSI), and 261–281 (VFAK…CLTM).

This sequence belongs to the UbiA prenyltransferase family. Protoheme IX farnesyltransferase subfamily.

It localises to the cell inner membrane. The enzyme catalyses heme b + (2E,6E)-farnesyl diphosphate + H2O = Fe(II)-heme o + diphosphate. It participates in porphyrin-containing compound metabolism; heme O biosynthesis; heme O from protoheme: step 1/1. In terms of biological role, converts heme B (protoheme IX) to heme O by substitution of the vinyl group on carbon 2 of heme B porphyrin ring with a hydroxyethyl farnesyl side group. This chain is Protoheme IX farnesyltransferase, found in Francisella tularensis subsp. holarctica (strain FTNF002-00 / FTA).